A 97-amino-acid polypeptide reads, in one-letter code: uncharacterized protein (97 aa).

This sequence to B.licheniformis xpaL1 and to B.subtilis XhlA.

This is an uncharacterized protein from Bacillus licheniformis.